The primary structure comprises 353 residues: Photosystem II D2 protein (353 aa).

Threonine 2 bears the N-acetylthreonine mark. A Phosphothreonine modification is found at threonine 2. A helical membrane pass occupies residues cysteine 41 to threonine 61. Residue histidine 118 coordinates chlorophyll a. The helical transmembrane segment at glycine 125–proline 141 threads the bilayer. Residues glutamine 130 and asparagine 143 each contribute to the pheophytin a site. A helical membrane pass occupies residues valine 153–serine 166. Histidine 198 is a binding site for chlorophyll a. A helical membrane pass occupies residues alanine 208 to aspartate 228. Histidine 215 and phenylalanine 262 together coordinate a plastoquinone. Residue histidine 215 participates in Fe cation binding. Residue histidine 269 coordinates Fe cation. Residues glycine 279 to arginine 295 traverse the membrane as a helical segment.

Belongs to the reaction center PufL/M/PsbA/D family. In terms of assembly, PSII is composed of 1 copy each of membrane proteins PsbA, PsbB, PsbC, PsbD, PsbE, PsbF, PsbH, PsbI, PsbJ, PsbK, PsbL, PsbM, PsbT, PsbX, PsbY, PsbZ, Psb30/Ycf12, at least 3 peripheral proteins of the oxygen-evolving complex and a large number of cofactors. It forms dimeric complexes. Requires The D1/D2 heterodimer binds P680, chlorophylls that are the primary electron donor of PSII, and subsequent electron acceptors. It shares a non-heme iron and each subunit binds pheophytin, quinone, additional chlorophylls, carotenoids and lipids. There is also a Cl(-1) ion associated with D1 and D2, which is required for oxygen evolution. The PSII complex binds additional chlorophylls, carotenoids and specific lipids. as cofactor.

It is found in the plastid. The protein localises to the chloroplast thylakoid membrane. The enzyme catalyses 2 a plastoquinone + 4 hnu + 2 H2O = 2 a plastoquinol + O2. In terms of biological role, photosystem II (PSII) is a light-driven water:plastoquinone oxidoreductase that uses light energy to abstract electrons from H(2)O, generating O(2) and a proton gradient subsequently used for ATP formation. It consists of a core antenna complex that captures photons, and an electron transfer chain that converts photonic excitation into a charge separation. The D1/D2 (PsbA/PsbD) reaction center heterodimer binds P680, the primary electron donor of PSII as well as several subsequent electron acceptors. D2 is needed for assembly of a stable PSII complex. The sequence is that of Photosystem II D2 protein from Nuphar advena (Common spatterdock).